Here is a 586-residue protein sequence, read N- to C-terminus: Arginine--tRNA ligase (586 aa).

A 'HIGH' region motif is present at residues 133–143; that stretch reads ANPTGPLNIVS.

Belongs to the class-I aminoacyl-tRNA synthetase family. Monomer.

The protein resides in the cytoplasm. The enzyme catalyses tRNA(Arg) + L-arginine + ATP = L-arginyl-tRNA(Arg) + AMP + diphosphate. This is Arginine--tRNA ligase from Leptospira interrogans serogroup Icterohaemorrhagiae serovar copenhageni (strain Fiocruz L1-130).